Here is a 303-residue protein sequence, read N- to C-terminus: Probable 5-dehydro-4-deoxyglucarate dehydratase (303 aa).

The protein belongs to the DapA family.

The catalysed reaction is 5-dehydro-4-deoxy-D-glucarate + H(+) = 2,5-dioxopentanoate + CO2 + H2O. Its pathway is carbohydrate acid metabolism; D-glucarate degradation; 2,5-dioxopentanoate from D-glucarate: step 2/2. This is Probable 5-dehydro-4-deoxyglucarate dehydratase from Acinetobacter baylyi (strain ATCC 33305 / BD413 / ADP1).